Here is a 261-residue protein sequence, read N- to C-terminus: MAHQAHAYHMVDPSPWPLTGAVAALLLTSGLAIWFPFNSLILLTLGLVLLLLTMYQWWRDIVREGTFQGHHTPPVQKGLRYGMILFITSEVFFFLGFFWAFYHSSLAPTPELGGCWPPTGIVPLNPFEVPLLNTAVLLASGVTVTWAHHSIMEGERKQAIHSLTLTILLGFYFTFLQAMEYYEAPFTIADGVYGSTFFVATGFHGLHVIIGSTFLAICLLRQIRYHFTSEHHFGFEAAAWYWHFVDVVWLFLYISIYWWGS.

Residues 1–15 (MAHQAHAYHMVDPSP) are Mitochondrial matrix-facing. Residues 16-34 (WPLTGAVAALLLTSGLAIW) traverse the membrane as a helical segment. The Mitochondrial intermembrane segment spans residues 35 to 40 (FPFNSL). The chain crosses the membrane as a helical span at residues 41-66 (ILLTLGLVLLLLTMYQWWRDIVREGT). Residues 67–72 (FQGHHT) are Mitochondrial matrix-facing. Residues 73 to 105 (PPVQKGLRYGMILFITSEVFFFLGFFWAFYHSS) traverse the membrane as a helical segment. Over 106 to 128 (LAPTPELGGCWPPTGIVPLNPFE) the chain is Mitochondrial intermembrane. The chain crosses the membrane as a helical span at residues 129–152 (VPLLNTAVLLASGVTVTWAHHSIM). Residues 153 to 155 (EGE) lie on the Mitochondrial matrix side of the membrane. A helical membrane pass occupies residues 156–183 (RKQAIHSLTLTILLGFYFTFLQAMEYYE). The Mitochondrial intermembrane portion of the chain corresponds to 184 to 190 (APFTIAD). Residues 191-223 (GVYGSTFFVATGFHGLHVIIGSTFLAICLLRQI) traverse the membrane as a helical segment. The Mitochondrial matrix segment spans residues 224-232 (RYHFTSEHH). Residues 233–256 (FGFEAAAWYWHFVDVVWLFLYISI) traverse the membrane as a helical segment. The Mitochondrial intermembrane segment spans residues 257-261 (YWWGS).

The protein belongs to the cytochrome c oxidase subunit 3 family. In terms of assembly, component of the cytochrome c oxidase (complex IV, CIV), a multisubunit enzyme composed of 14 subunits. The complex is composed of a catalytic core of 3 subunits MT-CO1, MT-CO2 and MT-CO3, encoded in the mitochondrial DNA, and 11 supernumerary subunits COX4I, COX5A, COX5B, COX6A, COX6B, COX6C, COX7A, COX7B, COX7C, COX8 and NDUFA4, which are encoded in the nuclear genome. The complex exists as a monomer or a dimer and forms supercomplexes (SCs) in the inner mitochondrial membrane with NADH-ubiquinone oxidoreductase (complex I, CI) and ubiquinol-cytochrome c oxidoreductase (cytochrome b-c1 complex, complex III, CIII), resulting in different assemblies (supercomplex SCI(1)III(2)IV(1) and megacomplex MCI(2)III(2)IV(2)).

It is found in the mitochondrion inner membrane. The enzyme catalyses 4 Fe(II)-[cytochrome c] + O2 + 8 H(+)(in) = 4 Fe(III)-[cytochrome c] + 2 H2O + 4 H(+)(out). Functionally, component of the cytochrome c oxidase, the last enzyme in the mitochondrial electron transport chain which drives oxidative phosphorylation. The respiratory chain contains 3 multisubunit complexes succinate dehydrogenase (complex II, CII), ubiquinol-cytochrome c oxidoreductase (cytochrome b-c1 complex, complex III, CIII) and cytochrome c oxidase (complex IV, CIV), that cooperate to transfer electrons derived from NADH and succinate to molecular oxygen, creating an electrochemical gradient over the inner membrane that drives transmembrane transport and the ATP synthase. Cytochrome c oxidase is the component of the respiratory chain that catalyzes the reduction of oxygen to water. Electrons originating from reduced cytochrome c in the intermembrane space (IMS) are transferred via the dinuclear copper A center (CU(A)) of subunit 2 and heme A of subunit 1 to the active site in subunit 1, a binuclear center (BNC) formed by heme A3 and copper B (CU(B)). The BNC reduces molecular oxygen to 2 water molecules using 4 electrons from cytochrome c in the IMS and 4 protons from the mitochondrial matrix. This Tetraodon nigroviridis (Spotted green pufferfish) protein is Cytochrome c oxidase subunit 3 (mt-co3).